The primary structure comprises 283 residues: SNF1-related protein kinase regulatory subunit beta-1 (283 aa).

The segment covering 1–10 (MGNANGKDED) has biased composition (basic and acidic residues). Positions 1 to 63 (MGNANGKDED…PARSPSPFLF (63 aa)) are disordered. The N-myristoyl glycine moiety is linked to residue glycine 2. The segment covering 43–60 (SDSMSSSPPGSPARSPSP) has biased composition (low complexity). Residues 101-178 (PTIITWNQGG…VGNVCNILDV (78 aa)) form a kinase-interacting sequence (KIS) region. Residues 215–283 (EPLAVPPQLH…TVVLYKPLTR (69 aa)) are association with SNF1 complex (ASC).

It belongs to the 5'-AMP-activated protein kinase beta subunit family. In terms of assembly, subunit of a probable heterotrimeric complex consisting of an alpha catalytic (KIN10 or KIN11) subunit, and a beta (KINB) and a gamma (KING or SNF4) non-catalytic regulatory subunits. Interacts with SNF4 and CBL1. Interacts with FLZ1, FLZ2, FLZ8, FLZ9, FLZ10, FLZ12, FLZ13, FLZ14 and FLZ15. Sumoylated by SIZ1. Expressed in vegetative organs and, to lower extent, in reproductive organs.

The protein resides in the cell membrane. Regulatory subunit of the probable trimeric SNF1-related protein kinase (SnRK) complex, which may play a role in a signal transduction cascade regulating gene expression and carbohydrate metabolism in higher plants. The SnRK complex may also be involved in the regulation of fatty acid synthesis by phosphorylation of acetyl-CoA carboxylase and in assimilation of nitrogen by phosphorylating nitrate reductase. The polypeptide is SNF1-related protein kinase regulatory subunit beta-1 (KINB1) (Arabidopsis thaliana (Mouse-ear cress)).